We begin with the raw amino-acid sequence, 329 residues long: MTPVALDIAIHLAKIALIFFVVLTLAAYLVFAERRILAWIQDRKGPNRVGPFGLLQPLADLIKLLTKEDFRPAGADKWLFYLAPAMAAIPAILTFAVIPFGAPLTLFGREVPLQVADLNVGLLFFLALSSIAVYGVALGGWASNSKYALLGSIRGLAQLISYELSMGLSLVPTVMLAGSLRLSDIVAAQEGIWFIVYQPLAFVIFLISIAAECKRIPFDIPEAEGELVAGFHTEYSGMRFGLFFVGEYINIIVLGGLATTFFLGGWHGPWLPPFVWFSAKTLAFAFFFIWMRGTLPRLRYDQLMHLGWKVLTPLALVNILVTGWILMLR.

The next 8 membrane-spanning stretches (helical) occupy residues 12–32 (LAKI…LVFA), 78–98 (WLFY…FAVI), 120–140 (VGLL…ALGG), 159–179 (LISY…LAGS), 191–211 (GIWF…SIAA), 242–262 (LFFV…TTFF), 270–290 (WLPP…FFIW), and 308–328 (WKVL…ILML).

The protein belongs to the complex I subunit 1 family. In terms of assembly, NDH-1 is composed of 14 different subunits. Subunits NuoA, H, J, K, L, M, N constitute the membrane sector of the complex.

It localises to the cell inner membrane. It catalyses the reaction a quinone + NADH + 5 H(+)(in) = a quinol + NAD(+) + 4 H(+)(out). Functionally, NDH-1 shuttles electrons from NADH, via FMN and iron-sulfur (Fe-S) centers, to quinones in the respiratory chain. The immediate electron acceptor for the enzyme in this species is believed to be ubiquinone. Couples the redox reaction to proton translocation (for every two electrons transferred, four hydrogen ions are translocated across the cytoplasmic membrane), and thus conserves the redox energy in a proton gradient. This subunit may bind ubiquinone. In Geobacter metallireducens (strain ATCC 53774 / DSM 7210 / GS-15), this protein is NADH-quinone oxidoreductase subunit H 1.